Here is a 125-residue protein sequence, read N- to C-terminus: Translation initiation factor 5A (125 aa).

Hypusine is present on lysine 35.

The protein belongs to the eIF-5A family.

It localises to the cytoplasm. Its function is as follows. Functions by promoting the formation of the first peptide bond. The polypeptide is Translation initiation factor 5A (eIF5A) (Methanoregula boonei (strain DSM 21154 / JCM 14090 / 6A8)).